We begin with the raw amino-acid sequence, 62 residues long: Teretoxin Tsu1.1 (62 aa).

A signal peptide spans 1-21 (MSCFPVLFVMMLLASQSVWAF). Positions 22–40 (PEPETRIGTARDAESMGVR) are excised as a propeptide.

Belongs to the teretoxin A (TA) superfamily. Post-translationally, contains 2 disulfide bonds. As to expression, expressed by the venom duct.

The protein localises to the secreted. The chain is Teretoxin Tsu1.1 from Terebra subulata (Chocolate spotted auger).